The sequence spans 236 residues: Transmembrane protein 65 (236 aa).

Residues 1–57 (MSRLLPLLRSRTARSLRPGPAAAAAPRPPSWCCCGRGLLALAAPGGPRALGTHPKKE) constitute a mitochondrion transit peptide. Residues 58 to 106 (PIEALNTAQGARDFIYSLHSSERSCLLKELHRFESIAIAQEKLEAQPPT) lie on the Cytoplasmic side of the membrane. Residues 107–127 (PGQLRYVFIHNAIPFIGFGFL) form a helical membrane-spanning segment. Residues 128–138 (DNAIMIVAGTH) are Extracellular-facing. The helical transmembrane segment at 139-161 (IELSIGIILGISTMAAAALGNLV) threads the bilayer. Topologically, residues 162–205 (SDLAGLGLAGYVEALASRLGLSIPDLSPKQVDMWQTRVSSHLGK) are cytoplasmic. Residues 206–226 (AVGVTIGCILGMFPLIFFGGG) form a helical membrane-spanning segment. At 227-236 (EDDEKLEKKN) the chain is on the extracellular side.

In terms of assembly, monomer. Homodimer. Interacts with GJA1. Interacts weakly with DSP. Interacts with SCN1B.

Its subcellular location is the cell membrane. The protein resides in the mitochondrion inner membrane. Its function is as follows. Essential for maintaining proper cardiac intercalated disk (ICD) structure and function as well as cardiac conduction velocity in the heart. Its association with SCN1B is required for stabilizing the perinexus in the ICD and for localization of GJA1 and SCN5A to the ICD. May regulate the function of the gap junction protein GJA1 and may contribute to the stability and proper localization of GJA1 to cardiac intercalated disk thereby regulating gap junction communication. Regulates mitochondrial respiration and mitochondrial DNA copy number maintenance. The sequence is that of Transmembrane protein 65 (TMEM65) from Bos taurus (Bovine).